We begin with the raw amino-acid sequence, 113 residues long: Large ribosomal subunit protein P2 (113 aa).

The disordered stretch occupies residues 60 to 113; it reads SKVSSLSAGAGPSGGAAAAGADAGAAEAEKEEEPQEEEADVNMGDIFGGDDEDY. Low complexity predominate over residues 74–85; the sequence is GAAAAGADAGAA. Residues 88–99 are compositionally biased toward acidic residues; the sequence is EKEEEPQEEEAD.

It belongs to the eukaryotic ribosomal protein P1/P2 family. P1 and P2 exist as dimers at the large ribosomal subunit. Phosphorylated.

Its function is as follows. Plays an important role in the elongation step of protein synthesis. The sequence is that of Large ribosomal subunit protein P2 from Euplotes raikovi.